The following is a 149-amino-acid chain: Large ribosomal subunit protein uL22c (149 aa).

The protein belongs to the universal ribosomal protein uL22 family. In terms of assembly, part of the 50S ribosomal subunit.

It localises to the plastid. The protein resides in the chloroplast. In terms of biological role, this protein binds specifically to 23S rRNA. Its function is as follows. The globular domain of the protein is located near the polypeptide exit tunnel on the outside of the subunit, while an extended beta-hairpin is found that lines the wall of the exit tunnel in the center of the 70S ribosome. The chain is Large ribosomal subunit protein uL22c (rpl22) from Oryza nivara (Indian wild rice).